A 152-amino-acid chain; its full sequence is Transcriptional regulator MraZ (152 aa).

2 consecutive SpoVT-AbrB domains span residues 5-52 (TSAI…PLPE) and 81-124 (ASDC…HDTA).

It belongs to the MraZ family. As to quaternary structure, forms oligomers.

The protein localises to the cytoplasm. The protein resides in the nucleoid. The chain is Transcriptional regulator MraZ from Colwellia psychrerythraea (strain 34H / ATCC BAA-681) (Vibrio psychroerythus).